Reading from the N-terminus, the 131-residue chain is Small ribosomal subunit protein uS9 (131 aa).

It belongs to the universal ribosomal protein uS9 family.

The sequence is that of Small ribosomal subunit protein uS9 from Mycoplasmopsis synoviae (strain 53) (Mycoplasma synoviae).